Consider the following 568-residue polypeptide: DNA ligase 2 (568 aa).

Glu254 contacts ATP. The active-site N6-AMP-lysine intermediate is the Lys256. Residues Arg261, Arg276, Glu306, Phe346, Arg425, and Lys431 each coordinate ATP.

This sequence belongs to the ATP-dependent DNA ligase family. It depends on Mg(2+) as a cofactor.

The catalysed reaction is ATP + (deoxyribonucleotide)n-3'-hydroxyl + 5'-phospho-(deoxyribonucleotide)m = (deoxyribonucleotide)n+m + AMP + diphosphate.. Its function is as follows. DNA ligase that seals nicks in double-stranded DNA during DNA replication, DNA recombination and DNA repair. The protein is DNA ligase 2 of Methanosarcina mazei (strain ATCC BAA-159 / DSM 3647 / Goe1 / Go1 / JCM 11833 / OCM 88) (Methanosarcina frisia).